A 172-amino-acid chain; its full sequence is Histone H1-like protein HC2 (172 aa).

The interval 1–77 (MIGAQKKQSG…TVAKKPAVKK (77 aa)) is disordered. The span at 8-77 (QSGKKTASRA…TVAKKPAVKK (70 aa)) shows a compositional bias: basic residues.

It belongs to the histone H1/H5 family. HCT subfamily.

In terms of biological role, might have a role in establishing the nucleoid structure of elementary bodies. The chain is Histone H1-like protein HC2 (hctB) from Chlamydia pneumoniae (Chlamydophila pneumoniae).